The chain runs to 497 residues: L-arabinose isomerase (497 aa).

Mn(2+) contacts are provided by glutamate 306, glutamate 333, histidine 349, and histidine 448.

It belongs to the arabinose isomerase family. The cofactor is Mn(2+).

The enzyme catalyses beta-L-arabinopyranose = L-ribulose. It participates in carbohydrate degradation; L-arabinose degradation via L-ribulose; D-xylulose 5-phosphate from L-arabinose (bacterial route): step 1/3. Its function is as follows. Catalyzes the conversion of L-arabinose to L-ribulose. This Vibrio parahaemolyticus serotype O3:K6 (strain RIMD 2210633) protein is L-arabinose isomerase.